Consider the following 285-residue polypeptide: Avenin-like b2 (285 aa).

The N-terminal stretch at 1 to 18 (MKVFILALLALTATTAIA) is a signal peptide.

Belongs to the prolamin family. In terms of processing, contains disulfide bonds.

Its function is as follows. Seed storage protein. Might be integrated via inter-chain disulfide bonds within the glutenin polymer. This is Avenin-like b2 from Triticum aestivum (Wheat).